We begin with the raw amino-acid sequence, 855 residues long: Nuclear valosin-containing protein-like (855 aa).

The segment at 1–219 is interaction with RPL5; sequence MKPRPGVFVD…SLLESDKKRK (219 aa). The Nucleolar localization signal signature appears at 49-52; the sequence is RRKR. Lys70 is subject to N6-acetyllysine. Positions 83-234 are disordered; the sequence is LAKRARQDEE…KGNKRKTENL (152 aa). The Nuclear localization signal motif lies at 85–88; that stretch reads KRAR. Over residues 90-110 the composition is skewed to acidic residues; sequence DEEDEYTESYSDDDSNMEDYP. 2 stretches are compositionally biased toward polar residues: residues 113–123 and 131–157; these read QSANPMNSSLL and SESV…SKTG. Ser133 is modified (phosphoserine). At Thr137 the chain carries Phosphothreonine. Lys155 is modified (N6-acetyllysine). Ser190 bears the Phosphoserine mark. Residue Lys207 forms a Glycyl lysine isopeptide (Lys-Gly) (interchain with G-Cter in SUMO2) linkage. 2 positions are modified to phosphoserine: Ser210 and Ser214. Over residues 217–228 the composition is skewed to basic residues; sequence KRKGRAKGKGNK. Positions 217–231 match the Nuclear localization signal motif; that stretch reads KRKGRAKGKGNKRKT. The interval 266–473 is interaction with WDR74; the sequence is VGGNDATLKE…LTPGFVGADL (208 aa). Residue 304–311 participates in ATP binding; sequence GPPGCGKT. Residues 496–523 form a disordered region; the sequence is QKKKPEIEGLPSEGDQEERLGAEPTSET. Position 621 to 628 (621 to 628) interacts with ATP; sequence GPPGCGKT.

This sequence belongs to the AAA ATPase family. In terms of assembly, interacts with NCL/nucleolin. Isoform 1 and isoform 2 interact with TERT and isoform 1 exhibits a higher binding affinity for TERT compared to isoform 2. Isoform 1 interacts with MTREX in an ATP-dependent manner; the interaction is required to associate NVL with nuclear RNA exosome. Isoform 1 interacts with RPL5 in an ATP-dependent manner. Interacts with WDR74 (through WDR repeats); the interaction is independent of RNA or pre-60S ribosome particles.

It localises to the nucleus. The protein resides in the nucleolus. Its subcellular location is the nucleoplasm. Functionally, participates in the assembly of the telomerase holoenzyme and effecting of telomerase activity via its interaction with TERT. Involved in both early and late stages of the pre-rRNA processing pathways. Spatiotemporally regulates 60S ribosomal subunit biogenesis in the nucleolus. Catalyzes the release of specific assembly factors, such as WDR74, from pre-60S ribosomal particles through the ATPase activity. This is Nuclear valosin-containing protein-like from Mus musculus (Mouse).